The primary structure comprises 80 residues: Acyl carrier protein (80 aa).

One can recognise a Carrier domain in the interval glutamate 4–alanine 79. The residue at position 39 (serine 39) is an O-(pantetheine 4'-phosphoryl)serine.

Belongs to the acyl carrier protein (ACP) family. 4'-phosphopantetheine is transferred from CoA to a specific serine of apo-ACP by AcpS. This modification is essential for activity because fatty acids are bound in thioester linkage to the sulfhydryl of the prosthetic group.

It is found in the cytoplasm. Its pathway is lipid metabolism; fatty acid biosynthesis. Functionally, carrier of the growing fatty acid chain in fatty acid biosynthesis. The chain is Acyl carrier protein from Synechococcus elongatus (strain ATCC 33912 / PCC 7942 / FACHB-805) (Anacystis nidulans R2).